The following is a 379-amino-acid chain: Glucose-1-phosphate adenylyltransferase (379 aa).

Residues glycine 164, 179–180 (EK), and serine 190 contribute to the alpha-D-glucose 1-phosphate site.

The protein belongs to the bacterial/plant glucose-1-phosphate adenylyltransferase family. Homotetramer.

The enzyme catalyses alpha-D-glucose 1-phosphate + ATP + H(+) = ADP-alpha-D-glucose + diphosphate. It functions in the pathway glycan biosynthesis; glycogen biosynthesis. Involved in the biosynthesis of ADP-glucose, a building block required for the elongation reactions to produce glycogen. Catalyzes the reaction between ATP and alpha-D-glucose 1-phosphate (G1P) to produce pyrophosphate and ADP-Glc. The chain is Glucose-1-phosphate adenylyltransferase from Streptococcus agalactiae serotype III (strain NEM316).